The chain runs to 548 residues: (S)-beta-macrocarpene synthase (548 aa).

Positions 302 and 306 each coordinate Mg(2+). Residues Asp-302, Asp-306, Arg-443, and Asn-446 each contribute to the substrate site. The DDXXD motif signature appears at 302–306 (DDTLD). Residues Asn-446, Ser-450, and Glu-454 each contribute to the Mg(2+) site.

Belongs to the terpene synthase family. As to quaternary structure, monomer. Mg(2+) is required as a cofactor. The cofactor is Mn(2+). In terms of tissue distribution, expressed in roots. Not detected in leaves, unless damaged by herbivory or infected by fungi.

The protein localises to the cytoplasm. The enzyme catalyses (S)-beta-bisabolene = (S)-beta-macrocarpene. It catalyses the reaction (2E,6E)-farnesyl diphosphate = (S)-beta-bisabolene + diphosphate. It carries out the reaction (2E)-geranyl diphosphate = (4S)-limonene + diphosphate. The catalysed reaction is (2E)-geranyl diphosphate = beta-myrcene + diphosphate. The enzyme catalyses (2E)-geranyl diphosphate = terpinolene + diphosphate. It catalyses the reaction (2E)-geranyl diphosphate + H2O = (S)-linalool + diphosphate. Its pathway is secondary metabolite biosynthesis; terpenoid biosynthesis. Functionally, involved in the biosynthesis of the bicyclic sesquiterpene (S)-beta-macrocarpene. Can use both geranyl diphosphate and farnesyl diphosphate as substrate, but not geranylgeranyl diphosphate. Produces mainly (S)-beta-macrocarpene, but also smaller amounts of beta-bisabolene and (E)-beta-farnesene when used with farnesyl diphosphate as substrate. In the presence of geranyl diphosphate, produces the acyclic monoterpenes beta-myrcene and linalool along with minor amounts of the cyclic compounds limonene, alpha-thujene, sabinene and alpha-terpinolene. May be involved in plant defense. In Zea mays (Maize), this protein is (S)-beta-macrocarpene synthase.